A 313-amino-acid chain; its full sequence is Ribosomal RNA small subunit methyltransferase H (313 aa).

S-adenosyl-L-methionine contacts are provided by residues 35-37 (GGY), D53, F80, D101, and Q108.

Belongs to the methyltransferase superfamily. RsmH family.

Its subcellular location is the cytoplasm. It carries out the reaction cytidine(1402) in 16S rRNA + S-adenosyl-L-methionine = N(4)-methylcytidine(1402) in 16S rRNA + S-adenosyl-L-homocysteine + H(+). In terms of biological role, specifically methylates the N4 position of cytidine in position 1402 (C1402) of 16S rRNA. The polypeptide is Ribosomal RNA small subunit methyltransferase H (Acidiphilium cryptum (strain JF-5)).